The sequence spans 249 residues: T-cell immunoreceptor with Ig and ITIM domains (249 aa).

Positions 1–28 (MHGWLLLVWVQGLIQAAFLATAIGATAG) are cleaved as a signal peptide. Positions 29–127 (TIDTKRNISA…GGIYKGRIFL (99 aa)) constitute an Ig-like V-type domain. Residues 29 to 148 (TIDTKRNISA…LAQFQTAPLG (120 aa)) are Extracellular-facing. The tract at residues 35–45 (NISAEEGGSVI) is homodimerization. Cys48 and Cys111 are disulfide-bonded. A glycan (N-linked (GlcNAc...) asparagine) is linked at Asn104. The chain crosses the membrane as a helical span at residues 149 to 169 (GTMAAVLGLICLMVTGVTVLA). Over 170–249 (RKDKSIRMHS…ESFIAVSKTG (80 aa)) the chain is Cytoplasmic. Residues 182-222 (SGLGRTEAEPQEWNLRSLSSPGSPVQTQTAPAGPCGEQAED) form a disordered region. The span at 195–211 (NLRSLSSPGSPVQTQTA) shows a compositional bias: polar residues. Positions 234–239 (LSYRSL) match the ITIM motif motif.

Homodimer in cis; binds with high affinity to PVR, forming a heterotetrameric assembly of two TIGIT and two PVR molecules. Binds with lower affinity to NECTIN2 and NECTIN3. Interacts with GRB2. Interacts with NECTIN4.

It is found in the cell membrane. Functionally, inhibitory receptor that plays a role in the modulation of immune responses. Suppresses T-cell activation by promoting the generation of mature immunoregulatory dendritic cells. Upon binding to its ligands PVR/CD155 or NECTIN2/CD112, which are expressed on antigen-presenting cells, sends inhibitory signals to the T-cell or NK cell. Mechanistically, interaction with ligand leads to phosphorylation of the cytoplasmic tail by Src family tyrosine kinases such as FYN or LCK, allowing subsequent binding to adapter GRB2 and SHIP1/INPP5D. In turn, inhibits PI3K and MAPK signaling cascades. In addition, associates with beta-arrestin-2/ARRB2 to recruit SHIP1/INPP5D that suppresses autoubiquitination of TRAF6 and subsequently inhibits NF-kappa-B signaling pathway. Also acts as a receptor for NECTIN4 to inhibit NK cell cytotoxicity. The polypeptide is T-cell immunoreceptor with Ig and ITIM domains (Mus musculus (Mouse)).